The primary structure comprises 614 residues: RNA polymerase sigma factor RpoD (614 aa).

A disordered region spans residues 168–245; the sequence is DPDDNIAAPT…PEEKRSYPQG (78 aa). The span at 193–209 shows a compositional bias: acidic residues; the sequence is EADDDEEESEGGDDEEE. Over residues 215–232 the composition is skewed to polar residues; it reads TRSSQPSVSVRYPSSFSD. Residues 380-450 form a sigma-70 factor domain-2 region; it reads MVEANLRLVI…TRSIADQART (71 aa). Residues 404-407 carry the Interaction with polymerase core subunit RpoC motif; sequence DLIQ. Positions 459 to 535 are sigma-70 factor domain-3; the sequence is ETINKLNRIS…DSTMQSPIYV (77 aa). A sigma-70 factor domain-4 region spans residues 548-601; the sequence is VLSGLTAREAKVLRMRFGIDMNTDHTLEEVGKQFDVTRERIRQIEAKAWRKLRH. A DNA-binding region (H-T-H motif) is located at residues 574 to 593; the sequence is LEEVGKQFDVTRERIRQIEA.

Belongs to the sigma-70 factor family. RpoD/SigA subfamily. In terms of assembly, interacts transiently with the RNA polymerase catalytic core.

Its subcellular location is the cytoplasm. In terms of biological role, sigma factors are initiation factors that promote the attachment of RNA polymerase to specific initiation sites and are then released. This sigma factor is the primary sigma factor during exponential growth. This is RNA polymerase sigma factor RpoD from Pseudomonas putida (Arthrobacter siderocapsulatus).